The chain runs to 485 residues: Leukocyte receptor cluster member 9 (485 aa).

The segment at 8–35 (SEAPAVCRFFLEGRCRFGARCRQPHPGA) adopts a C3H1-type zinc-finger fold. A disordered region spans residues 212 to 247 (ETRTGLDSSLETPEVDGPTKETGLNGTTELEMPDPS).

This Mus musculus (Mouse) protein is Leukocyte receptor cluster member 9 (Leng9).